Here is a 140-residue protein sequence, read N- to C-terminus: MSMKYLMLLFAAMIIRSFANSGNAIETTLSEITNTTTDIPAIRLCGPEGNGYCFHGICIHARDIDGMYCRCSHGYTGIRCQHVVLVDYQRSEKPNTTTSYIPSPGIVLVLLVSIIMCCLLFVYRFTRRTNKLPLQDMVVP.

The first 18 residues, 1-18 (MSMKYLMLLFAAMIIRSF), serve as a signal peptide directing secretion. Residues 19 to 100 (ANSGNAIETT…SEKPNTTTSY (82 aa)) lie on the Extracellular side of the membrane. N-linked (GlcNAc...) asparagine; by host glycosylation is present at Asn-34. Residues 41-81 (AIRLCGPEGNGYCFHGICIHARDIDGMYCRCSHGYTGIRCQ) enclose the EGF-like domain. Intrachain disulfides connect Cys-45–Cys-58, Cys-53–Cys-69, and Cys-71–Cys-80. N-linked (GlcNAc...) asparagine; by host glycosylation occurs at Asn-95. The helical transmembrane segment at 101–121 (IPSPGIVLVLLVSIIMCCLLF) threads the bilayer. Topologically, residues 122-140 (VYRFTRRTNKLPLQDMVVP) are cytoplasmic.

Belongs to the orthopoxvirus OPG019 family. As to quaternary structure, variola growth factor interacts with host EGFR and promotes EGFR dimerization.

It localises to the host membrane. Its subcellular location is the secreted. Its function is as follows. Stimulates cellular proliferation (hyperplasia)and mobility around infected cells to promote rapid and efficient spread of infection. This effect is beneficial for virus replication in vivo, because poxviruses replicate possibly better in proliferating cells than in quiescent cells. Acts by binding host EGFR, inducing its dimerization, autophosphorylation and leading to activation of several cellular pathways regulating cell proliferation or cell survival. The activation by host EGFR of mitogen activated protein kinases (MAPK) and extracellular-signal regulated kinases (ERK) are essential for the positive effect of vaccinia growth factor on poxvirus virulence in vivo. The polypeptide is Pro-variola growth factor (OPG019) (Variola virus).